A 264-amino-acid chain; its full sequence is S-adenosylmethionine decarboxylase proenzyme (264 aa).

Serine 114 (schiff-base intermediate with substrate; via pyruvic acid) is an active-site residue. The residue at position 114 (serine 114) is a Pyruvic acid (Ser); by autocatalysis. Histidine 119 functions as the Proton acceptor; for processing activity in the catalytic mechanism. Residue cysteine 142 is the Proton donor; for catalytic activity of the active site.

The protein belongs to the prokaryotic AdoMetDC family. Type 2 subfamily. In terms of assembly, heterooctamer of four alpha and four beta chains arranged as a tetramer of alpha/beta heterodimers. Pyruvate serves as cofactor. Post-translationally, is synthesized initially as an inactive proenzyme. Formation of the active enzyme involves a self-maturation process in which the active site pyruvoyl group is generated from an internal serine residue via an autocatalytic post-translational modification. Two non-identical subunits are generated from the proenzyme in this reaction, and the pyruvate is formed at the N-terminus of the alpha chain, which is derived from the carboxyl end of the proenzyme. The post-translation cleavage follows an unusual pathway, termed non-hydrolytic serinolysis, in which the side chain hydroxyl group of the serine supplies its oxygen atom to form the C-terminus of the beta chain, while the remainder of the serine residue undergoes an oxidative deamination to produce ammonia and the pyruvoyl group blocking the N-terminus of the alpha chain.

It catalyses the reaction S-adenosyl-L-methionine + H(+) = S-adenosyl 3-(methylsulfanyl)propylamine + CO2. It participates in amine and polyamine biosynthesis; S-adenosylmethioninamine biosynthesis; S-adenosylmethioninamine from S-adenosyl-L-methionine: step 1/1. In terms of biological role, catalyzes the decarboxylation of S-adenosylmethionine to S-adenosylmethioninamine (dcAdoMet), the propylamine donor required for the synthesis of the polyamines spermine and spermidine from the diamine putrescine. The chain is S-adenosylmethionine decarboxylase proenzyme from Chromohalobacter salexigens (strain ATCC BAA-138 / DSM 3043 / CIP 106854 / NCIMB 13768 / 1H11).